A 305-amino-acid chain; its full sequence is Ribonuclease BN (305 aa).

7 residues coordinate Zn(2+): H64, H66, D68, H69, H141, D212, and H270. Residue D68 is the Proton acceptor of the active site.

It belongs to the RNase Z family. RNase BN subfamily. In terms of assembly, homodimer. The cofactor is Zn(2+).

In terms of biological role, zinc phosphodiesterase, which has both exoribonuclease and endoribonuclease activities. The polypeptide is Ribonuclease BN (Salmonella gallinarum (strain 287/91 / NCTC 13346)).